A 152-amino-acid chain; its full sequence is Ribosome maturation factor RimP (152 aa).

Belongs to the RimP family.

The protein resides in the cytoplasm. Required for maturation of 30S ribosomal subunits. The protein is Ribosome maturation factor RimP of Citrobacter koseri (strain ATCC BAA-895 / CDC 4225-83 / SGSC4696).